A 342-amino-acid chain; its full sequence is MRVDLFDFELPSENIALRPARPRDSARLLGVGRDGPFRDLIVRDLPDLLNPGDVLVFNDTRVIPAQLEGQRGEARVGATLHKRIDLRRWQAFVRNAKRLREGDVIQFGAGVTATAEMRLPDGSWTLFFPGEEPVEVLLERAGRMPLPPYIAGKRPTDEQDREDYQTMFAAKDGAVAAPTAALHFTPSLMEALAARGVATETLTLHVGAGTFLPVKADDTQDHQMHAEWGTIDAATADRLNAARAAGKRVIAVGTTSLRLLESATGEDRVIRPFEGDTSIFITPGYTFRAIDGLMTNFHLPKSTLFMLVSALMGLDRMQAAYAHAIAGGYRFYSYGDSSLLLP.

The protein belongs to the QueA family. Monomer.

The protein resides in the cytoplasm. The enzyme catalyses 7-aminomethyl-7-carbaguanosine(34) in tRNA + S-adenosyl-L-methionine = epoxyqueuosine(34) in tRNA + adenine + L-methionine + 2 H(+). It participates in tRNA modification; tRNA-queuosine biosynthesis. Its function is as follows. Transfers and isomerizes the ribose moiety from AdoMet to the 7-aminomethyl group of 7-deazaguanine (preQ1-tRNA) to give epoxyqueuosine (oQ-tRNA). This is S-adenosylmethionine:tRNA ribosyltransferase-isomerase from Novosphingobium aromaticivorans (strain ATCC 700278 / DSM 12444 / CCUG 56034 / CIP 105152 / NBRC 16084 / F199).